A 162-amino-acid chain; its full sequence is Peptidyl-prolyl cis-trans isomerase-like 1 (162 aa).

Positions 1-155 constitute a PPIase cyclophilin-type domain; the sequence is MATDVTFDTS…DEVKILRAKV (155 aa).

Belongs to the cyclophilin-type PPIase family. PPIL1 subfamily.

It carries out the reaction [protein]-peptidylproline (omega=180) = [protein]-peptidylproline (omega=0). PPIases accelerate the folding of proteins. It catalyzes the cis-trans isomerization of proline imidic peptide bonds in oligopeptides. The polypeptide is Peptidyl-prolyl cis-trans isomerase-like 1 (cyp1) (Emericella nidulans (strain FGSC A4 / ATCC 38163 / CBS 112.46 / NRRL 194 / M139) (Aspergillus nidulans)).